The following is a 416-amino-acid chain: Multifunctional CCA protein (416 aa).

ATP contacts are provided by Gly8 and Arg11. The CTP site is built by Gly8 and Arg11. Positions 21 and 23 each coordinate Mg(2+). ATP contacts are provided by Arg91, Arg138, and Arg141. Residues Arg91, Arg138, and Arg141 each contribute to the CTP site. Residues 229 to 331 (TGLHQELVSD…YELLQRCDAF (103 aa)) enclose the HD domain.

Belongs to the tRNA nucleotidyltransferase/poly(A) polymerase family. Bacterial CCA-adding enzyme type 1 subfamily. Monomer. Can also form homodimers and oligomers. Mg(2+) serves as cofactor. It depends on Ni(2+) as a cofactor.

The enzyme catalyses a tRNA precursor + 2 CTP + ATP = a tRNA with a 3' CCA end + 3 diphosphate. It catalyses the reaction a tRNA with a 3' CCA end + 2 CTP + ATP = a tRNA with a 3' CCACCA end + 3 diphosphate. Its function is as follows. Catalyzes the addition and repair of the essential 3'-terminal CCA sequence in tRNAs without using a nucleic acid template. Adds these three nucleotides in the order of C, C, and A to the tRNA nucleotide-73, using CTP and ATP as substrates and producing inorganic pyrophosphate. tRNA 3'-terminal CCA addition is required both for tRNA processing and repair. Also involved in tRNA surveillance by mediating tandem CCA addition to generate a CCACCA at the 3' terminus of unstable tRNAs. While stable tRNAs receive only 3'-terminal CCA, unstable tRNAs are marked with CCACCA and rapidly degraded. This Xylella fastidiosa (strain M12) protein is Multifunctional CCA protein.